Reading from the N-terminus, the 219-residue chain is Protein VERNALIZATION 2 (219 aa).

Residues 138-180 (REAKVMRYREKKKRRRYEKQIRYESRKAYAEMRPRVKGRFAKV) enclose the CCT domain.

Mainly expressed in leaves, and at low levels in the shoot apical meristem (SAM).

Its subcellular location is the nucleus. Its function is as follows. Involved in the regulation of vernalization; this process in essential for flowering in cv. Bd29-1 but seems do not occur in cv. Bd21. This chain is Protein VERNALIZATION 2, found in Brachypodium distachyon (Purple false brome).